Here is a 105-residue protein sequence, read N- to C-terminus: Large ribosomal subunit protein uL24 (105 aa).

It belongs to the universal ribosomal protein uL24 family. As to quaternary structure, part of the 50S ribosomal subunit.

Its function is as follows. One of two assembly initiator proteins, it binds directly to the 5'-end of the 23S rRNA, where it nucleates assembly of the 50S subunit. In terms of biological role, one of the proteins that surrounds the polypeptide exit tunnel on the outside of the subunit. This chain is Large ribosomal subunit protein uL24, found in Xanthomonas oryzae pv. oryzae (strain MAFF 311018).